Here is a 429-residue protein sequence, read N- to C-terminus: Glutamate-1-semialdehyde 2,1-aminomutase (429 aa).

Residue lysine 265 is modified to N6-(pyridoxal phosphate)lysine.

This sequence belongs to the class-III pyridoxal-phosphate-dependent aminotransferase family. HemL subfamily. As to quaternary structure, homodimer. Pyridoxal 5'-phosphate serves as cofactor.

It is found in the cytoplasm. It catalyses the reaction (S)-4-amino-5-oxopentanoate = 5-aminolevulinate. It participates in porphyrin-containing compound metabolism; protoporphyrin-IX biosynthesis; 5-aminolevulinate from L-glutamyl-tRNA(Glu): step 2/2. In Shewanella halifaxensis (strain HAW-EB4), this protein is Glutamate-1-semialdehyde 2,1-aminomutase.